A 57-amino-acid chain; its full sequence is Small ribosomal subunit protein bS21 (57 aa).

Residues 32–42 show a composition bias toward basic and acidic residues; it reads VRRREHYEKPS. The disordered stretch occupies residues 32-57; the sequence is VRRREHYEKPSQRRKRKLEASRRRRR. Residues 43-57 are compositionally biased toward basic residues; sequence QRRKRKLEASRRRRR.

The protein belongs to the bacterial ribosomal protein bS21 family.

This is Small ribosomal subunit protein bS21 from Synechococcus elongatus (strain ATCC 33912 / PCC 7942 / FACHB-805) (Anacystis nidulans R2).